A 140-amino-acid chain; its full sequence is Actin-depolymerizing factor 10 (140 aa).

A Phosphoserine modification is found at Ser-6. The ADF-H domain maps to 7–139; sequence GMHVSDECKL…SLDIIKGRVN (133 aa).

It belongs to the actin-binding proteins ADF family.

The protein localises to the cytoplasm. Its subcellular location is the cytoskeleton. Its function is as follows. Actin-depolymerizing protein. Severs actin filaments (F-actin) and binds to actin monomers. In Arabidopsis thaliana (Mouse-ear cress), this protein is Actin-depolymerizing factor 10 (ADF10).